We begin with the raw amino-acid sequence, 131 residues long: Small ribosomal subunit protein uS8 (131 aa).

The protein belongs to the universal ribosomal protein uS8 family. Part of the 30S ribosomal subunit. Contacts proteins S5 and S12.

One of the primary rRNA binding proteins, it binds directly to 16S rRNA central domain where it helps coordinate assembly of the platform of the 30S subunit. This chain is Small ribosomal subunit protein uS8, found in Alkalilimnicola ehrlichii (strain ATCC BAA-1101 / DSM 17681 / MLHE-1).